A 713-amino-acid polypeptide reads, in one-letter code: Undecaprenyl-diphosphooligosaccharide--protein glycotransferase (713 aa).

Topologically, residues 1–11 (MLKKEYLKNPY) are cytoplasmic. The helical transmembrane segment at 12–35 (LVLFAMIVLAYVFSVFCRFYWVWW) threads the bilayer. The Periplasmic segment spans residues 36–96 (ASEFNEYFFN…YWLYKITPFS (61 aa)). The DXD motif 1 motif lies at 52–54 (SND). Residue Asp-54 coordinates Mn(2+). A helical membrane pass occupies residues 97-122 (FESIILYMSTFLSSLVVIPIILLANE). The Cytoplasmic portion of the chain corresponds to 123-125 (YKR). Residues 126–144 (PLMGFVAALLASVANSYYN) form a helical membrane-spanning segment. Over 145–152 (RTMSGYYD) the chain is Periplasmic. Asp-152 contributes to the Mn(2+) binding site. Residues 152 to 154 (DTD) carry the DXD motif 2 motif. The chain crosses the membrane as a helical span at residues 153 to 174 (TDMLVIVLPMFILFFMVRMILK). The Cytoplasmic segment spans residues 175 to 176 (KD). Residues 177–192 (FFSLIALPLFIGIYLW) form a helical membrane-spanning segment. The Periplasmic portion of the chain corresponds to 193 to 197 (WYPSS). Residue 194 to 196 (YPS) participates in [alpha-D-GalNAc-(1-&gt;4)]2-[beta-D-Glc-(1-&gt;3)]-[alpha-D-GalNAc-(1-&gt;4)]2-alpha-D-GalNAc-(1-&gt;3)-alpha-D-diNAcBac-tri-trans,hepta-cis-undecaprenyl diphosphate binding. Residues 198–215 (YTLNVALIGLFLIYTLIF) form a helical membrane-spanning segment. At 216 to 220 (HRKEK) the chain is on the cytoplasmic side. A helical transmembrane segment spans residues 221–233 (IFYIAVILSSLTL). The Periplasmic portion of the chain corresponds to 234–237 (SNIA). The helical transmembrane segment at 238–254 (WFYQSAIIVILFALFAL) threads the bilayer. The Cytoplasmic segment spans residues 255–260 (EQKRLN). A helical transmembrane segment spans residues 261 to 278 (FMIIGILGSATLIFLILS). Topologically, residues 279 to 324 (GGVDPILYQLKFYIFRSDESANLTQGFMYFNVNQTIQEVENVDFSE) are periplasmic. Tyr-291 lines the [alpha-D-GalNAc-(1-&gt;4)]2-[beta-D-Glc-(1-&gt;3)]-[alpha-D-GalNAc-(1-&gt;4)]2-alpha-D-GalNAc-(1-&gt;3)-alpha-D-diNAcBac-tri-trans,hepta-cis-undecaprenyl diphosphate pocket. A TIXE motif motif is present at residues 313 to 316 (TIQE). Glu-316 contributes to the Mn(2+) binding site. The chain crosses the membrane as a helical span at residues 325-347 (FMRRISGSEIVFLFSLFGFVWLL). Residues 348–352 (RKHKS) are Cytoplasmic-facing. The chain crosses the membrane as a helical span at residues 353–369 (MIMALPILVLGFLALKG). Residues 370–373 (GLRF) are Periplasmic-facing. [alpha-D-GalNAc-(1-&gt;4)]2-[beta-D-Glc-(1-&gt;3)]-[alpha-D-GalNAc-(1-&gt;4)]2-alpha-D-GalNAc-(1-&gt;3)-alpha-D-diNAcBac-tri-trans,hepta-cis-undecaprenyl diphosphate is bound at residue Arg-372. The helical transmembrane segment at 374-396 (TIYSVPVMALGFGFLLSEFKAIL) threads the bilayer. Residues 397–406 (VKKYSQLTSN) lie on the Cytoplasmic side of the membrane. A helical membrane pass occupies residues 407-427 (VCIVFATILTLAPVFIHIYNY). The Periplasmic segment spans residues 428–713 (KAPTVFSQNE…RDAKVFKLKI (286 aa)). Residues 457-459 (WWD) are interacts with target acceptor peptide in protein substrate. The short motif at 457 to 461 (WWDYG) is the WWDYG motif element. Tyr-462 is a binding site for [alpha-D-GalNAc-(1-&gt;4)]2-[beta-D-Glc-(1-&gt;3)]-[alpha-D-GalNAc-(1-&gt;4)]2-alpha-D-GalNAc-(1-&gt;3)-alpha-D-diNAcBac-tri-trans,hepta-cis-undecaprenyl diphosphate. Asn-534 is a glycosylation site (N-linked (DATDGlc) asparagine). An MI motif motif is present at residues 568–575 (MSLIFSTV).

This sequence belongs to the STT3 family. Requires Mg(2+) as cofactor. It depends on Mn(2+) as a cofactor.

It localises to the cell inner membrane. The catalysed reaction is tritrans,heptacis-undecaprenyl diphosphooligosaccharide + [protein]-L-asparagine = tritrans,heptacis-undecaprenyl diphosphate + a glycoprotein with the oligosaccharide chain attached by N-beta-D-glycosyl linkage to protein L-asparagine.. It functions in the pathway protein modification; protein glycosylation. In terms of biological role, oligosaccharyl transferase (OST) that catalyzes the initial transfer of a defined glycan (GalNAc(2)GlcGalNAc(3)Bac(NAc)(2) in eubacteria, where Bac(NAc)(2) is di-N-acetyl bacillosamine) from the lipid carrier undecaprenol-pyrophosphate to an asparagine residue within an Asp/Glu-Asn-X-Ser/Thr consensus motif in nascent polypeptide chains, the first step in protein N-glycosylation. The protein is Undecaprenyl-diphosphooligosaccharide--protein glycotransferase (pglB) of Campylobacter jejuni subsp. jejuni serotype O:2 (strain ATCC 700819 / NCTC 11168).